A 329-amino-acid polypeptide reads, in one-letter code: MNITVLGAGAWGTALAIYLSARHHVTLWTRNTGHLAELAALRVNQRYLPGQHLPDSIHLASALSDALEQAELVLVVVPVAGLRVTLQRIAALNQSLPLVLGCKGFEAGTAKLPCQVVEDVYSAEITCGVLSGPSFAQEVAMGLPAALTLASDDDAFARRIASEIHTSILRVYSSSDVVGVEVGGALKNVIAIAAGISDGLAFGNNARAALITRGLAEITRLGVALGGHRKTFTGLSGIGDLILTCTGDLSRNRQVGMMLAAGCQLPEILLEIGHVTEGVYTVREAHEMGRQLQIDMPVTQAVYSILYEQIPVESAIRNMLDREPGAETD.

NADPH is bound by residues Trp-11, Arg-30, and Lys-103. Residues Lys-103, Gly-132, and Ser-134 each coordinate sn-glycerol 3-phosphate. An NADPH-binding site is contributed by Ala-136. Lys-187, Asp-240, Ser-250, Arg-251, and Asn-252 together coordinate sn-glycerol 3-phosphate. Lys-187 (proton acceptor) is an active-site residue. Arg-251 is a binding site for NADPH. Val-275 and Glu-277 together coordinate NADPH.

It belongs to the NAD-dependent glycerol-3-phosphate dehydrogenase family.

It is found in the cytoplasm. The catalysed reaction is sn-glycerol 3-phosphate + NAD(+) = dihydroxyacetone phosphate + NADH + H(+). It carries out the reaction sn-glycerol 3-phosphate + NADP(+) = dihydroxyacetone phosphate + NADPH + H(+). It functions in the pathway membrane lipid metabolism; glycerophospholipid metabolism. Functionally, catalyzes the reduction of the glycolytic intermediate dihydroxyacetone phosphate (DHAP) to sn-glycerol 3-phosphate (G3P), the key precursor for phospholipid synthesis. The sequence is that of Glycerol-3-phosphate dehydrogenase [NAD(P)+] from Nitrosomonas eutropha (strain DSM 101675 / C91 / Nm57).